We begin with the raw amino-acid sequence, 897 residues long: Protein SAP1 (897 aa).

Disordered regions lie at residues 112-144, 195-219, 302-398, 413-438, and 456-561; these read EEPA…PVFQ, PSKP…PPLK, QMSD…TKST, SKSN…PNSV, and KKVA…REEP. Residues 120-137 are compositionally biased toward polar residues; the sequence is MPSSKTYTNHSSSFTRST. A compositionally biased stretch (basic and acidic residues) spans 209–219; the sequence is NPIEHNDPPLK. Low complexity predominate over residues 307–321; it reads SVTSSTSSNKSVSSS. Over residues 364–380 the composition is skewed to polar residues; it reads LETSTTMDSSKIRNPQI. A compositionally biased stretch (basic residues) spans 468–478; sequence KKSHPILKSKT. The segment covering 480-496 has biased composition (low complexity); it reads KVPNSSSKKTSSHPSRP. Positions 497–523 are enriched in polar residues; sequence VSNSKPYSHGASQNKKPSKNQTTSMSK. A Phosphoserine modification is found at Ser536. 645-652 contacts ATP; that stretch reads GPPGTGKT.

The protein belongs to the AAA ATPase family. In terms of assembly, interacts with SPT2/SIN1.

This Saccharomyces cerevisiae (strain ATCC 204508 / S288c) (Baker's yeast) protein is Protein SAP1 (SAP1).